We begin with the raw amino-acid sequence, 650 residues long: ATP-dependent zinc metalloprotease FtsH (650 aa).

Residues 1–10 lie on the Cytoplasmic side of the membrane; that stretch reads MKTKKSKSTL. The chain crosses the membrane as a helical span at residues 11-31; it reads WFWLIILLAIIVTIIIIAVTV. Over 32 to 123 the chain is Extracellular; sequence KGTTQVISDA…LVYQGSVGMA (92 aa). Residues 124 to 144 traverse the membrane as a helical segment; it reads LLVSLAPLLIYVLLFGGIIWF. At 145–650 the chain is on the cytoplasmic side; it reads MMKSSSGAGA…DIKVEDLDID (506 aa). Residue 217-224 participates in ATP binding; sequence GPPGTGKT. His437 lines the Zn(2+) pocket. Residue Glu438 is part of the active site. 2 residues coordinate Zn(2+): His441 and Asp515.

It in the central section; belongs to the AAA ATPase family. The protein in the C-terminal section; belongs to the peptidase M41 family. In terms of assembly, homohexamer. Zn(2+) is required as a cofactor.

It localises to the cell membrane. Acts as a processive, ATP-dependent zinc metallopeptidase for both cytoplasmic and membrane proteins. Plays a role in the quality control of integral membrane proteins. The sequence is that of ATP-dependent zinc metalloprotease FtsH from Mesoplasma florum (strain ATCC 33453 / NBRC 100688 / NCTC 11704 / L1) (Acholeplasma florum).